Consider the following 758-residue polypeptide: UPF0313 protein CV_1738 (758 aa).

Residues Ala377–Arg642 form the Radical SAM core domain. Residues Cys391, Cys395, and Cys398 each contribute to the [4Fe-4S] cluster site. The tract at residues Gly698 to Arg758 is disordered. Residues Arg727–Gly737 show a composition bias toward gly residues.

The protein belongs to the UPF0313 family. [4Fe-4S] cluster is required as a cofactor.

This Chromobacterium violaceum (strain ATCC 12472 / DSM 30191 / JCM 1249 / CCUG 213 / NBRC 12614 / NCIMB 9131 / NCTC 9757 / MK) protein is UPF0313 protein CV_1738.